A 29-amino-acid polypeptide reads, in one-letter code: HSQGTFTSDYSKYLDSRRAQDFVQWLMST.

It belongs to the glucagon family.

The protein localises to the secreted. Its function is as follows. Glucagon plays a key role in glucose metabolism and homeostasis. Regulates blood glucose by increasing gluconeogenesis and decreasing glycolysis. The chain is Glucagon (GCG) from Meleagris gallopavo (Wild turkey).